Consider the following 601-residue polypeptide: Terpinolene synthase, chloroplastic (601 aa).

The N-terminal 32 residues, 1–32 (MSTFVISNSMHVGISFSFLHKLPQTPPPQVVC), are a transit peptide targeting the chloroplast. Residues D354, D358, D498, T502, and E506 each contribute to the Mg(2+) site. The short motif at 354–358 (DDVYD) is the DDXXD motif element.

Belongs to the terpene synthase family. Tpsd subfamily. It depends on Mg(2+) as a cofactor. Mn(2+) is required as a cofactor.

It is found in the plastid. It localises to the chloroplast. It catalyses the reaction (2E)-geranyl diphosphate = terpinolene + diphosphate. It functions in the pathway secondary metabolite biosynthesis; terpenoid biosynthesis. Functionally, monoterpene synthase that catalyzes the formation of terpinolene and other monoterpenes from geranyl diphosphate. In Ocimum basilicum (Sweet basil), this protein is Terpinolene synthase, chloroplastic (TES).